Reading from the N-terminus, the 295-residue chain is Undecaprenyl-diphosphatase (295 aa).

6 helical membrane-spanning segments follow: residues 39 to 59 (PGAA…LLYF), 97 to 117 (WYII…QHAI), 121 to 141 (LRNL…LWIV), 198 to 218 (AFLM…VKAI), 232 to 252 (ATIA…IGFL), and 263 to 283 (FAIY…CGVL).

This sequence belongs to the UppP family.

It is found in the cell membrane. The enzyme catalyses di-trans,octa-cis-undecaprenyl diphosphate + H2O = di-trans,octa-cis-undecaprenyl phosphate + phosphate + H(+). In terms of biological role, catalyzes the dephosphorylation of undecaprenyl diphosphate (UPP). Confers resistance to bacitracin. In Bifidobacterium animalis subsp. lactis (strain AD011), this protein is Undecaprenyl-diphosphatase.